Reading from the N-terminus, the 687-residue chain is Putative pentatricopeptide repeat-containing protein At3g15930 (687 aa).

PPR repeat units follow at residues 98 to 132, 133 to 168, 169 to 199, 200 to 234, 235 to 269, 270 to 304, 305 to 331, 332 to 366, 367 to 401, 402 to 432, 433 to 467, 468 to 498, and 504 to 534; these read DVVVWNNMIKGWSKVDCDGEGVRLYLNMLKEGVTP, DSHTFPFLLNGLKRDGGALACGKKLHCHVVKFGLGS, NLYVQNALVKMYSLCGLMDMARGVFDRRCKE, DVFSWNLMISGYNRMKEYEESIELLVEMERNLVSP, TSVTLLLVLSACSKVKDKDLCKRVHEYVSECKTEP, SLRLENALVNAYAACGEMDIAVRIFRSMKARDVIS, WTSIVKGYVERGNLKLARTYFDQMPVR, DRISWTIMIDGYLRAGCFNESLEIFREMQSAGMIP, DEFTMVSVLTACAHLGSLEIGEWIKTYIDKNKIKN, DVVVGNALIDMYFKCGCSEKAQKVFHDMDQR, DKFTWTAMVVGLANNGQGQEAIKVFFQMQDMSIQP, DDITYLGVLSACNHSGMVDQARKFFAKMRSD, and SLVHYGCMVDMLGRAGLVKEAYEILRKMPMN. A type E motif region spans residues 539–614; sequence VWGALLGASR…TPGFSLIEVN (76 aa). A type E(+) motif region spans residues 615–645; sequence GFAHEFVAGDKSHLQSEEIYMKLEELAQEST.

Belongs to the PPR family. PCMP-E subfamily.

The sequence is that of Putative pentatricopeptide repeat-containing protein At3g15930 (PCMP-E51) from Arabidopsis thaliana (Mouse-ear cress).